A 284-amino-acid chain; its full sequence is Tropomyosin alpha-1 chain (284 aa).

Position 1 is an N-acetylmethionine (M1). Residues 1-40 are disordered; it reads MDAIKKKMQMLKLDKENALDRAEQAESDKKASEDRSKQLE. Residues 1–284 are a coiled coil; the sequence is MDAIKKKMQM…DHALNDMTSI (284 aa). Residues 12-40 are compositionally biased toward basic and acidic residues; the sequence is KLDKENALDRAEQAESDKKASEDRSKQLE.

In terms of assembly, homodimer. Heterodimer of an alpha (TPM1, TPM3 or TPM4) and a beta (TPM2) chain.

It localises to the cytoplasm. The protein resides in the cytoskeleton. In terms of biological role, binds to actin filaments in muscle and non-muscle cells. Plays a central role, in association with the troponin complex, in the calcium dependent regulation of vertebrate striated muscle contraction. Smooth muscle contraction is regulated by interaction with caldesmon. In non-muscle cells is implicated in stabilizing cytoskeleton actin filaments. In Chelon auratus (Golden grey mullet), this protein is Tropomyosin alpha-1 chain.